Reading from the N-terminus, the 179-residue chain is Large ribosomal subunit protein uL5 (179 aa).

This sequence belongs to the universal ribosomal protein uL5 family. As to quaternary structure, part of the 50S ribosomal subunit; part of the 5S rRNA/L5/L18/L25 subcomplex. Contacts the 5S rRNA and the P site tRNA. Forms a bridge to the 30S subunit in the 70S ribosome.

This is one of the proteins that bind and probably mediate the attachment of the 5S RNA into the large ribosomal subunit, where it forms part of the central protuberance. In the 70S ribosome it contacts protein S13 of the 30S subunit (bridge B1b), connecting the 2 subunits; this bridge is implicated in subunit movement. Contacts the P site tRNA; the 5S rRNA and some of its associated proteins might help stabilize positioning of ribosome-bound tRNAs. This chain is Large ribosomal subunit protein uL5, found in Tolumonas auensis (strain DSM 9187 / NBRC 110442 / TA 4).